Consider the following 443-residue polypeptide: EGF-containing fibulin-like extracellular matrix protein 2 (443 aa).

Residues methionine 1–glycine 23 form the signal peptide. Residues tyrosine 36–leucine 81 enclose the EGF-like 1; atypical domain. Disulfide bonds link cysteine 58/cysteine 121, cysteine 65/cysteine 80, cysteine 71/cysteine 109, cysteine 127/cysteine 140, cysteine 134/cysteine 149, cysteine 151/cysteine 162, cysteine 168/cysteine 177, cysteine 173/cysteine 186, cysteine 188/cysteine 201, cysteine 207/cysteine 217, cysteine 213/cysteine 226, cysteine 228/cysteine 241, cysteine 247/cysteine 258, cysteine 254/cysteine 267, cysteine 269/cysteine 281, cysteine 287/cysteine 300, cysteine 294/cysteine 309, and cysteine 315/cysteine 327. The region spanning aspartate 123–valine 163 is the EGF-like 2; calcium-binding domain. The region spanning aspartate 164–valine 202 is the EGF-like 3; calcium-binding domain. N-linked (GlcNAc...) asparagine glycosylation occurs at asparagine 198. The 40-residue stretch at aspartate 203–serine 242 folds into the EGF-like 4; calcium-binding domain. In terms of domain architecture, EGF-like 5; calcium-binding spans aspartate 243 to glutamine 282. Residues aspartate 283–leucine 328 form the EGF-like 6; calcium-binding domain. A glycan (N-linked (GlcNAc...) asparagine) is linked at asparagine 394.

The protein belongs to the fibulin family. Homodimer; disulfide-linked. Multimer; allows heparin binding. Monomer. Interacts with FBN1 (via N-terminal domain); this interaction inhibits EFEMP2 binding to LOX and ELN. Interacts with LOX (via propeptide); this interaction is strong and facilitates formation of ternary complexes with ELN during elastic fiber assembly; this interaction limits interaction of EFEMP2 with FBLN5. Interacts with PITX2. Interacts with ELN with moderate affinity; this interaction regulates ELN self-assembly maturation stage. Interacts with FBLN5 with moderate affinity. Interacts with LOXL1 (via propeptide), LTBP1 and TGFB1 stronger than with LOXL2 and LTBP3. Interacts with PCOLCE. Interacts with collagen type IV trimer (COL4A1-COL4A1-COL4A2), NID2 and moderately with COL15A1-derived endostatin. Interacts with EMILIN1; this interaction promotes the incorporation of EFEMP2 into the extracellular matrix. Interacts with LTBP4; the LTBP4 long form (LTBP4L) has a stronger binding affinity than the LTBP4 short form and the LTBP4 long form promotes fibrillar deposition of EFEMP2. Post-translationally, N-glycosylated; contains mostly complex-type glycans. Not O-glycosylated. Cleaved by ELANE; produces a 50-55 kDa fragment. Cleaved by MMP2 and MMP9; produces several fragments.

It localises to the secreted. The protein resides in the extracellular space. The protein localises to the extracellular matrix. It is found in the basement membrane. In terms of biological role, plays a crucial role in elastic fiber formation in tissue, and in the formation of ultrastructural connections between elastic laminae and smooth muscle cells in the aorta, therefore participates in terminal differentiation and maturation of smooth muscle cell (SMC) and in the mechanical properties and wall integrity maintenance of the aorta. In addition, is involved in the control of collagen fibril assembly in tissue throught proteolytic activation of LOX leading to cross- linking of collagen and elastin. Also promotes ELN coacervation and participates in the deposition of ELN coacervates on to microfibrils but also regulates ELN cross- linking through LOX interaction. Moreover adheres to the cells through heparin binding in a calcium-dependent manner and regulates vascularlar smooth muscle cells proliferation through angiotensin signaling. This Homo sapiens (Human) protein is EGF-containing fibulin-like extracellular matrix protein 2.